We begin with the raw amino-acid sequence, 207 residues long: LexA repressor (207 aa).

The H-T-H motif DNA-binding region spans 28–48 (VREIGEAVGLASSSTVHGHLS). Active-site for autocatalytic cleavage activity residues include Ser-130 and Lys-168.

It belongs to the peptidase S24 family. In terms of assembly, homodimer.

It carries out the reaction Hydrolysis of Ala-|-Gly bond in repressor LexA.. Functionally, represses a number of genes involved in the response to DNA damage (SOS response), including recA and lexA. In the presence of single-stranded DNA, RecA interacts with LexA causing an autocatalytic cleavage which disrupts the DNA-binding part of LexA, leading to derepression of the SOS regulon and eventually DNA repair. This Staphylococcus haemolyticus (strain JCSC1435) protein is LexA repressor.